Here is a 416-residue protein sequence, read N- to C-terminus: Major facilitator superfamily domain-containing protein 3 (416 aa).

A run of 12 helical transmembrane segments spans residues 10 to 30 (GLYL…PILL), 40 to 60 (VGLT…APLV), 68 to 88 (VWLT…AVLP), 99 to 119 (TTVM…DVAL), 139 to 158 (QVVA…LVFF), 170 to 190 (LTAT…LGRL), 204 to 224 (YLLQ…FVLT), 252 to 272 (LWSG…GGAL), 295 to 315 (LGGL…GASL), 324 to 344 (AALL…TATF), 365 to 385 (FLAT…GVLA), and 392 to 412 (LCFA…RLAP).

Belongs to the major facilitator superfamily.

Its subcellular location is the membrane. The polypeptide is Major facilitator superfamily domain-containing protein 3 (Mfsd3) (Rattus norvegicus (Rat)).